The sequence spans 343 residues: L-threonine 3-dehydrogenase (343 aa).

Residue cysteine 40 coordinates Zn(2+). Residues threonine 42 and histidine 45 each act as charge relay system in the active site. Zn(2+) contacts are provided by histidine 65, glutamate 66, cysteine 95, cysteine 98, cysteine 101, and cysteine 109. Residues isoleucine 177, aspartate 197, arginine 202, 264 to 266, and 288 to 289 contribute to the NAD(+) site; these read LGI and IY.

The protein belongs to the zinc-containing alcohol dehydrogenase family. In terms of assembly, homotetramer. The cofactor is Zn(2+).

The protein resides in the cytoplasm. The enzyme catalyses L-threonine + NAD(+) = (2S)-2-amino-3-oxobutanoate + NADH + H(+). Its pathway is amino-acid degradation; L-threonine degradation via oxydo-reductase pathway; glycine from L-threonine: step 1/2. Catalyzes the NAD(+)-dependent oxidation of L-threonine to 2-amino-3-ketobutyrate. The polypeptide is L-threonine 3-dehydrogenase (Aliivibrio fischeri (strain MJ11) (Vibrio fischeri)).